Here is a 95-residue protein sequence, read N- to C-terminus: MKLRPLHDRILVKRVEEETKTAGGLFIPETAKEKPQRGEVVAAGNGKKTEDGKVLPLDVKVGDKVLFGKYSGTEVKVDGEDFLMMREDDILAVVE.

The protein belongs to the GroES chaperonin family. As to quaternary structure, heptamer of 7 subunits arranged in a ring. Interacts with the chaperonin GroEL.

The protein localises to the cytoplasm. Its function is as follows. Together with the chaperonin GroEL, plays an essential role in assisting protein folding. The GroEL-GroES system forms a nano-cage that allows encapsulation of the non-native substrate proteins and provides a physical environment optimized to promote and accelerate protein folding. GroES binds to the apical surface of the GroEL ring, thereby capping the opening of the GroEL channel. This chain is Co-chaperonin GroES, found in Pelobacter propionicus (strain DSM 2379 / NBRC 103807 / OttBd1).